The primary structure comprises 437 residues: Elongation factor 1-gamma (437 aa).

N-acetylalanine is present on alanine 2. Residues 2–87 (AAGTLYTYPE…YVSNEELRGS (86 aa)) form the GST N-terminal domain. The GST C-terminal domain maps to 88 to 216 (TPEAAAQVVQ…VKLCEKMAQF (129 aa)). 2 positions are modified to N6-acetyllysine: lysine 147 and lysine 212. Residues 221 to 254 (FAETQPKKDTPRKEKGSREEKQKPQAERKEEKKA) show a composition bias toward basic and acidic residues. A disordered region spans residues 221 to 268 (FAETQPKKDTPRKEKGSREEKQKPQAERKEEKKAAAPAPEEEMDECEQ). A Glycyl lysine isopeptide (Lys-Gly) (interchain with G-Cter in SUMO1) cross-link involves residue lysine 253. The 162-residue stretch at 276–437 (AKDPFAHLPK…KAFNQGKIFK (162 aa)) folds into the EF-1-gamma C-terminal domain. A Glycyl lysine isopeptide (Lys-Gly) (interchain with G-Cter in SUMO2) cross-link involves residue lysine 285. At lysine 401 the chain carries N6-acetyllysine. Position 434 is an N6-acetyllysine; alternate (lysine 434). N6-malonyllysine; alternate is present on lysine 434.

In terms of assembly, EF-1 is composed of four subunits: alpha, beta, delta, and gamma. In terms of tissue distribution, highly expressed in pancreatic tumor tissue and to a lesser extent in normal kidney, intestine, pancreas, stomach, lung, brain, spleen and liver.

Probably plays a role in anchoring the complex to other cellular components. The chain is Elongation factor 1-gamma (EEF1G) from Homo sapiens (Human).